The primary structure comprises 424 residues: Probable serine/threonine-protein kinase PBL15 (424 aa).

The Protein kinase domain occupies 99 to 380; that stretch reads FSGNYLLGEG…AVVEALESLI (282 aa). ATP is bound by residues 105–113 and lysine 134; that span reads LGEGGFGKV. Tyrosine 179 carries the phosphotyrosine modification. Residue aspartate 229 is the Proton acceptor of the active site. Serine 233 carries the phosphoserine modification. Phosphothreonine is present on residues threonine 264 and threonine 269. Position 277 is a phosphotyrosine (tyrosine 277). The interval 390 to 424 is disordered; the sequence is GHWPLSPKSQGGKVSPKVRGDHRSGRKSAPGSLRS.

Belongs to the protein kinase superfamily. Ser/Thr protein kinase family. As to quaternary structure, interacts with the Xanthomonas campestris effector XopAC/AvrAC.

It is found in the cell membrane. It catalyses the reaction L-seryl-[protein] + ATP = O-phospho-L-seryl-[protein] + ADP + H(+). It carries out the reaction L-threonyl-[protein] + ATP = O-phospho-L-threonyl-[protein] + ADP + H(+). Functionally, may be involved in plant defense signaling. The chain is Probable serine/threonine-protein kinase PBL15 from Arabidopsis thaliana (Mouse-ear cress).